A 268-amino-acid polypeptide reads, in one-letter code: MPIKKLISKIVKKKDSDTEKNNYINLSALTEAEREIITNTIELKSKSVREIMVPRVDVVMIPMESSYDKVIKAFNRDRNSRIPVYKDGIDDIVGVLYVKDLIDAEEKNFSLKKILHKPLFVPISISLMELLKNFREKQIHIAMVVDEYGGFSGIVSMEDVLEQIIGDIRDEYDEEDEEIKSNDDGTYLVDARTRIDDFNKYEILPPIPDDEADTVGGFLFSYLGRLPKRNEDIEYNGYSFTVVGKSGNIVTKIRIEKLKKDNTAKNKD.

2 consecutive CBS domains span residues 52 to 111 and 114 to 171; these read MVPR…NFSL and ILHK…IRDE.

It belongs to the UPF0053 family.

In terms of biological role, bacterial hemolysins are exotoxins that attack blood cell membranes and cause cell rupture by mechanisms not clearly defined. The chain is Hemolysin C (tlyC) from Brachyspira hyodysenteriae (Treponema hyodysenteriae).